The chain runs to 450 residues: Zinc finger protein 446 (450 aa).

In terms of domain architecture, SCAN box spans 26–108 (RLRFRGFCYQ…ALVEGLQHDP (83 aa)). A Glycyl lysine isopeptide (Lys-Gly) (interchain with G-Cter in SUMO2) cross-link involves residue Lys-130. Disordered stretches follow at residues 130 to 155 (KTEE…QDTR) and 168 to 205 (EEPN…SFHP). Ser-137 bears the Phosphoserine mark. Residues 208 to 254 (IQEEWGLLDRSQKELYWDAMLEKYGTVVSLGLPPHQPEAQAQSELGM) form the KRAB domain. Ser-218 is modified (phosphoserine). 2 disordered regions span residues 263–331 (RSLR…PRKP) and 354–389 (HTSG…RRSL). Residues 275-286 (PGCPEAQPPQGP) show a composition bias toward pro residues. The segment covering 287-306 (GPAAWEGLSGAATPAPTVRP) has biased composition (low complexity). Thr-308 carries the phosphothreonine modification. Lys-330 participates in a covalent cross-link: Glycyl lysine isopeptide (Lys-Gly) (interchain with G-Cter in SUMO2). 3 C2H2-type zinc fingers span residues 332–359 (YTCE…SGPG), 395–422 (YPCE…GQRR), and 423–450 (HFCS…PEVP).

This sequence belongs to the krueppel C2H2-type zinc-finger protein family.

It is found in the nucleus. May be involved in transcriptional regulation. This is Zinc finger protein 446 (ZNF446) from Homo sapiens (Human).